A 61-amino-acid chain; its full sequence is Small ribosomal subunit protein uS14 (61 aa).

Zn(2+) contacts are provided by C24, C27, C40, and C43.

The protein belongs to the universal ribosomal protein uS14 family. Zinc-binding uS14 subfamily. As to quaternary structure, part of the 30S ribosomal subunit. Contacts proteins S3 and S10. Zn(2+) is required as a cofactor.

Functionally, binds 16S rRNA, required for the assembly of 30S particles and may also be responsible for determining the conformation of the 16S rRNA at the A site. The chain is Small ribosomal subunit protein uS14 from Finegoldia magna (strain ATCC 29328 / DSM 20472 / WAL 2508) (Peptostreptococcus magnus).